A 142-amino-acid chain; its full sequence is Hemoglobin subunit alpha (142 aa).

S1 is subject to N-acetylserine. The Globin domain occupies 1-142 (SLSDKDKAVV…LALALSEKYR (142 aa)). Residue H59 participates in O2 binding. H88 lines the heme b pocket.

Belongs to the globin family. In terms of assembly, heterotetramer of two alpha chains and two beta chains. In terms of tissue distribution, red blood cells.

Functionally, involved in oxygen transport from gills to the various peripheral tissues. In Carassius auratus (Goldfish), this protein is Hemoglobin subunit alpha (hba).